Here is a 212-residue protein sequence, read N- to C-terminus: Putative inactive 6-phospho-alpha-glucosidase (212 aa).

Residue 4 to 70 (FSVVVAGGGS…PDIAFSYTTD (67 aa)) participates in NAD(+) binding. Positions 169 and 200 each coordinate Mn(2+).

It belongs to the glycosyl hydrolase 4 family.

The polypeptide is Putative inactive 6-phospho-alpha-glucosidase (Escherichia coli (strain K12)).